The primary structure comprises 308 residues: Mu-like prophage FluMu major head subunit (308 aa).

To phage Mu protein T.

This Haemophilus influenzae (strain ATCC 51907 / DSM 11121 / KW20 / Rd) protein is Mu-like prophage FluMu major head subunit.